The sequence spans 512 residues: Probable pectinesterase/pectinesterase inhibitor 54 (512 aa).

Positions 1–24 are cleaved as a signal peptide; the sequence is MGVIDMVLFWVLLVNALLIVDASS. Residues 29–193 are pectinesterase inhibitor 54; sequence FAYQNEMQRH…SRLVSNSLTL (165 aa). 2 N-linked (GlcNAc...) asparagine glycosylation sites follow: Asn71 and Asn131. The interval 229–496 is pectinesterase 54; the sequence is HVVVAKDGSG…FSVVKRRNGE (268 aa). Gln302 serves as a coordination point for substrate. The active-site Proton donor; for pectinesterase activity is the Asp325. Cysteines 339 and 359 form a disulfide. Catalysis depends on Asp346, which acts as the Nucleophile; for pectinesterase activity. Residues Arg415 and Trp417 each coordinate substrate.

In the N-terminal section; belongs to the PMEI family. It in the C-terminal section; belongs to the pectinesterase family. Expressed in siliques.

It is found in the secreted. The protein resides in the cell wall. The catalysed reaction is [(1-&gt;4)-alpha-D-galacturonosyl methyl ester](n) + n H2O = [(1-&gt;4)-alpha-D-galacturonosyl](n) + n methanol + n H(+). It functions in the pathway glycan metabolism; pectin degradation; 2-dehydro-3-deoxy-D-gluconate from pectin: step 1/5. Its function is as follows. Acts in the modification of cell walls via demethylesterification of cell wall pectin. The chain is Probable pectinesterase/pectinesterase inhibitor 54 (PME54) from Arabidopsis thaliana (Mouse-ear cress).